We begin with the raw amino-acid sequence, 230 residues long: Large ribosomal subunit protein uL1 (230 aa).

It belongs to the universal ribosomal protein uL1 family. In terms of assembly, part of the 50S ribosomal subunit.

Its function is as follows. Binds directly to 23S rRNA. The L1 stalk is quite mobile in the ribosome, and is involved in E site tRNA release. Protein L1 is also a translational repressor protein, it controls the translation of the L11 operon by binding to its mRNA. In Rhodopseudomonas palustris (strain BisB18), this protein is Large ribosomal subunit protein uL1.